The primary structure comprises 233 residues: Segregation and condensation protein A (233 aa).

The protein belongs to the ScpA family. In terms of assembly, component of a cohesin-like complex composed of ScpA, ScpB and the Smc homodimer, in which ScpA and ScpB bind to the head domain of Smc. The presence of the three proteins is required for the association of the complex with DNA.

The protein resides in the cytoplasm. Its function is as follows. Participates in chromosomal partition during cell division. May act via the formation of a condensin-like complex containing Smc and ScpB that pull DNA away from mid-cell into both cell halves. The chain is Segregation and condensation protein A from Streptococcus pyogenes serotype M1.